Here is a 189-residue protein sequence, read N- to C-terminus: NADH-quinone oxidoreductase subunit B (189 aa).

The [4Fe-4S] cluster site is built by C39, C40, C104, and C135.

The protein belongs to the complex I 20 kDa subunit family. As to quaternary structure, NDH-1 is composed of 14 different subunits. Subunits NuoB, C, D, E, F, and G constitute the peripheral sector of the complex. The cofactor is [4Fe-4S] cluster.

It localises to the cell inner membrane. The catalysed reaction is a quinone + NADH + 5 H(+)(in) = a quinol + NAD(+) + 4 H(+)(out). In terms of biological role, NDH-1 shuttles electrons from NADH, via FMN and iron-sulfur (Fe-S) centers, to quinones in the respiratory chain. The immediate electron acceptor for the enzyme in this species is believed to be a menaquinone. Couples the redox reaction to proton translocation (for every two electrons transferred, four hydrogen ions are translocated across the cytoplasmic membrane), and thus conserves the redox energy in a proton gradient. In Chlorobaculum tepidum (strain ATCC 49652 / DSM 12025 / NBRC 103806 / TLS) (Chlorobium tepidum), this protein is NADH-quinone oxidoreductase subunit B.